The chain runs to 205 residues: Protein N-terminal glutamine amidohydrolase (205 aa).

Catalysis depends on residues cysteine 20, histidine 74, and aspartate 90.

This sequence belongs to the NTAQ1 family. In terms of assembly, monomer.

The catalysed reaction is N-terminal L-glutaminyl-[protein] + H2O = N-terminal L-glutamyl-[protein] + NH4(+). In terms of biological role, mediates the side-chain deamidation of N-terminal glutamine residues to glutamate, an important step in N-end rule pathway of protein degradation. Conversion of the resulting N-terminal glutamine to glutamate renders the protein susceptible to arginylation, polyubiquitination and degradation as specified by the N-end rule. Does not act on substrates with internal or C-terminal glutamine and does not act on non-glutamine residues in any position. This chain is Protein N-terminal glutamine amidohydrolase (tun), found in Drosophila willistoni (Fruit fly).